Reading from the N-terminus, the 640-residue chain is F-box only protein 43 (640 aa).

Residue T176 is modified to Phosphothreonine. Residue S275 is modified to Phosphoserine. Residues 328 to 354 (LQEQGQSEDEMQTVHPNSDSGVLESLQ) are disordered. Positions 423–480 (MGIEQLDILTELQYRNLKHILAMVLESLTSESLYSAWNVSRNWREIVAQDKKANRRRK) constitute an F-box domain. The ZBR-type zinc finger occupies 568-616 (ALKPCPRCQSPAKYQPHKKRGLCSRLACGFDFCVLCLCAYHGSEDCRRG). Residues C572, C575, C590, C595, C600, C603, H608, and C613 each coordinate Zn(2+). The segment at 615 to 640 (RGSAKARGSKDVLPGSAQSKRNLKRL) is disordered.

In terms of assembly, part of a SCF (SKP1-cullin-F-box) protein ligase complex. Interaction with SKP1 does not occur. Interacts with ANAPC2; the interaction is direct, ANAPC4, CDC16, CDC23; the interaction is direct, ANAPC10; the interaction is direct and CDC26, during spermatogenesis. Interacts with CDC20. Phosphorylated on Thr-176 and Ser-275 in response to calcium, which is a prerequisite for ubiquitination and proteasomal degradation. Post-translationally, ubiquitinated in response to calcium, which promotes proteasomal degradation. As to expression, present in testis and ovary (at protein level). Expression is high in immature oocytes, and diminishes after oocyte activation. Expressed post-meiotically in spermatids and sperm.

It functions in the pathway protein modification; protein ubiquitination. Its function is as follows. Required to establish and maintain the arrest of oocytes at the second meiotic metaphase until fertilization. Acts by inhibiting the anaphase-promoting complex/cyclosome (APC/C) ubiquitin ligase. Probably recognizes and binds to some phosphorylated proteins and promotes their ubiquitination and degradation. Plays a vital role in modulating the ubiquitilation of CCNB1 and CDK1 during gametogenesis. The polypeptide is F-box only protein 43 (Fbxo43) (Mus musculus (Mouse)).